Consider the following 552-residue polypeptide: Probable protein kinase UbiB (552 aa).

Residues 121 to 504 form the Protein kinase domain; it reads HFDTVPLASA…QGLQRRVVNA (384 aa). ATP is bound by residues 127–135 and lysine 149; that span reads LASASISQV. Catalysis depends on aspartate 284, which acts as the Proton acceptor. Helical transmembrane passes span 501-521 and 526-546; these read VVNA…YGLH and YLGA…LALF.

The protein belongs to the ABC1 family. UbiB subfamily.

Its subcellular location is the cell inner membrane. It functions in the pathway cofactor biosynthesis; ubiquinone biosynthesis [regulation]. Is probably a protein kinase regulator of UbiI activity which is involved in aerobic coenzyme Q (ubiquinone) biosynthesis. This Xylella fastidiosa (strain 9a5c) protein is Probable protein kinase UbiB.